Here is a 278-residue protein sequence, read N- to C-terminus: NAD kinase (278 aa).

Asp56 (proton acceptor) is an active-site residue. Residues Asp56 to Gly57, Asn132 to Glu133, Arg158, Asp160, and Thr171 to Ser176 contribute to the NAD(+) site.

It belongs to the NAD kinase family. A divalent metal cation is required as a cofactor.

The protein resides in the cytoplasm. The enzyme catalyses NAD(+) + ATP = ADP + NADP(+) + H(+). Its function is as follows. Involved in the regulation of the intracellular balance of NAD and NADP, and is a key enzyme in the biosynthesis of NADP. Catalyzes specifically the phosphorylation on 2'-hydroxyl of the adenosine moiety of NAD to yield NADP. This Streptococcus agalactiae serotype V (strain ATCC BAA-611 / 2603 V/R) protein is NAD kinase.